The chain runs to 214 residues: Charged multivesicular body protein 2b-B (214 aa).

The stretch at glutamine 25–lysine 55 forms a coiled coil. Positions methionine 178–serine 200 are disordered. An MIT-interacting motif motif is present at residues glutamate 202–glycine 212.

The protein belongs to the SNF7 family. As to quaternary structure, probable core component of the endosomal sorting required for transport complex III (ESCRT-III). ESCRT-III components are thought to multimerize to form a flat lattice on the perimeter membrane of the endosome.

It localises to the cytoplasm. The protein localises to the cytosol. Its subcellular location is the late endosome membrane. Probable core component of the endosomal sorting required for transport complex III (ESCRT-III) which is involved in multivesicular bodies (MVBs) formation and sorting of endosomal cargo proteins into MVBs. MVBs contain intraluminal vesicles (ILVs) that are generated by invagination and scission from the limiting membrane of the endosome and mostly are delivered to lysosomes enabling degradation of membrane proteins, such as stimulated growth factor receptors, lysosomal enzymes and lipids. This is Charged multivesicular body protein 2b-B (chmp2b-b) from Xenopus laevis (African clawed frog).